A 403-amino-acid chain; its full sequence is uncharacterized protein (403 aa).

Over residues leucine 55–alanine 88 the composition is skewed to polar residues. Positions leucine 55–tryptophan 95 are disordered. At serine 58 the chain carries Phosphoserine. Positions glutamine 113–glycine 177 constitute a J domain. The chain crosses the membrane as a helical span at residues serine 263–phenylalanine 283.

The protein resides in the endoplasmic reticulum membrane. This is an uncharacterized protein from Schizosaccharomyces pombe (strain 972 / ATCC 24843) (Fission yeast).